The chain runs to 671 residues: Fusexin 1 (671 aa).

Over 1-12 the chain is Cytoplasmic; sequence MRAVSDFLKNKW. A helical membrane pass occupies residues 13–33; it reads VAVPAVALLILSLGFLAQNYI. Topologically, residues 34–574 are extracellular; it reads TGSFVSGDQI…DPFCADGPLE (541 aa). 4 cysteine pairs are disulfide-bonded: Cys-145–Cys-180, Cys-409–Cys-452, Cys-480–Cys-500, and Cys-513–Cys-528. The tract at residues 168-173 is fusion loop; that stretch reads GAIADY. The chain crosses the membrane as a helical span at residues 575-595; the sequence is MLSKMFHLVAGTAVAFFTGSL. The Cytoplasmic segment spans residues 596 to 628; that stretch reads GYRAGRWVDGEYQIKGGFDPLKSRSVSRAKRGR. A helical membrane pass occupies residues 629-649; that stretch reads FLIGLIAELVSFLLGFYVILL. Position 650 (Val-650) is a topological domain, extracellular. The helical transmembrane segment at 651–671 threads the bilayer; sequence PIWAQLMVILGYVLFKYYTPF.

The protein belongs to the HAP2/GCS1 family. Fusexin 1 subfamily. Homotrimer stabilized by interdomain contacts and numerous Ca(2+) and Na(+) ions.

Its subcellular location is the cell surface. The protein resides in the cell membrane. Its function is as follows. Exhibits fusogenic activity. Mediates cell-cell fusion in mammalian cells (bilateral fusion). The sequence is that of Fusexin 1 from Natrinema altunense (strain JCM 12890 / CGMCC 1.3731 / AJ2).